The sequence spans 1081 residues: WD repeat-containing protein 64 (1081 aa).

14 WD repeats span residues 102 to 152 (DPIA…ATQK), 153 to 198 (GLIT…GSSQ), 199 to 265 (ENYF…VLDS), 266 to 314 (KNFK…LEDN), 315 to 356 (LPVR…NIST), 357 to 400 (KPVG…TLSL), 401 to 444 (LQVF…TRMI), 445 to 488 (QDTK…ETGL), 489 to 532 (QVYQ…FGSG), 533 to 631 (QEMK…LIVE), 632 to 740 (RNFS…PQSS), 741 to 803 (KGSK…EGRL), 804 to 857 (LKDM…EKKF), and 858 to 895 (KQLLSWRAHSLEIIQVIYVEEKQVVLTASIDGSVRLWH). The segment covering 726–745 (CSSSQCESSKGPQSSKGSKQ) has biased composition (low complexity). The segment at 726–757 (CSSSQCESSKGPQSSKGSKQSIHDSEVKGEQT) is disordered. The segment covering 746-756 (SIHDSEVKGEQ) has biased composition (basic and acidic residues). A disordered region spans residues 1036–1060 (DSSDGITGKKKGGHVQREKAPRRRS). Positions 1043 to 1060 (GKKKGGHVQREKAPRRRS) are enriched in basic residues.

The chain is WD repeat-containing protein 64 (WDR64) from Homo sapiens (Human).